We begin with the raw amino-acid sequence, 701 residues long: Epithelial splicing regulatory protein 2 (701 aa).

RRM domains are found at residues 226-303 (TVIR…KATG), 327-407 (VIIR…RSTA), and 448-523 (CVRL…VEVF).

It belongs to the ESRP family.

Its subcellular location is the nucleus. Functionally, mRNA splicing factor that regulates the formation of epithelial cell-specific isoforms. Specifically regulates the expression of FGFR2-IIIb, an epithelial cell-specific isoform of FGFR2. Acts by directly binding specific sequences in mRNAs. Binds the GU-rich sequence motifs in the ISE/ISS-3, a cis-element regulatory region present in the mRNA of FGFR2. The polypeptide is Epithelial splicing regulatory protein 2 (ESRP2) (Gallus gallus (Chicken)).